A 213-amino-acid polypeptide reads, in one-letter code: Uracil phosphoribosyltransferase (213 aa).

5-phospho-alpha-D-ribose 1-diphosphate-binding positions include arginine 78, arginine 103, and 131-139 (DPMLATGGT). Uracil is bound by residues isoleucine 197 and 202–204 (GDA). Aspartate 203 contacts 5-phospho-alpha-D-ribose 1-diphosphate.

It belongs to the UPRTase family. Requires Mg(2+) as cofactor.

It catalyses the reaction UMP + diphosphate = 5-phospho-alpha-D-ribose 1-diphosphate + uracil. It participates in pyrimidine metabolism; UMP biosynthesis via salvage pathway; UMP from uracil: step 1/1. Its activity is regulated as follows. Allosterically activated by GTP. In terms of biological role, catalyzes the conversion of uracil and 5-phospho-alpha-D-ribose 1-diphosphate (PRPP) to UMP and diphosphate. The protein is Uracil phosphoribosyltransferase of Bifidobacterium longum subsp. infantis (strain ATCC 15697 / DSM 20088 / JCM 1222 / NCTC 11817 / S12).